Reading from the N-terminus, the 451-residue chain is Plasmepsin III (451 aa).

Residues methionine 1–leucine 37 are Cytoplasmic-facing. Positions methionine 1 to glycine 123 are excised as a propeptide. A helical; Signal-anchor for type II membrane protein transmembrane segment spans residues phenylalanine 38–phenylalanine 58. The Lumenal segment spans residues glutamate 59–leucine 451. The Peptidase A1 domain maps to serine 139–alanine 446. 2 cysteine pairs are disulfide-bonded: cysteine 170–cysteine 175 and cysteine 372–cysteine 408.

The protein belongs to the peptidase A1 family. As to quaternary structure, probable homodimer; in the zymogen form. Monomer; in the active form. Acidification disrupts homodimerization. Component of the hemozoin formation complex (HFC) composed of falcipains FP2A and/or FP2B, plasmepsins PMII, PMIII/HAP and PMIV, heme detoxifying protein HDP and falcilysin FLN. The HFC complex is involved in hemoglobin degradation and detoxification of heme in the food vacuole during the asexual blood stage. In terms of processing, proteolytically cleaved into the soluble active mature form by cysteine proteases in the digestive vacuole of trophozoites. Proteolysis requires an acidic environment. Transprocessing may serve as an alternate activation system.

Its subcellular location is the membrane. The protein resides in the vacuole lumen. The catalysed reaction is Hydrolysis of the bonds linking certain hydrophobic residues in hemoglobin or globin. Also cleaves small molecules substrates such as Ala-Leu-Glu-Arg-Thr-Phe-|-Phe(NO2)-Ser-Phe-Pro-Thr.. Its activity is regulated as follows. Dimerization causes loss of catalytic activity. Inhibited by pepstatin A. Inhibited by Zn(2+). During the asexual blood stage, catalyzes the cleavage of denatured host hemoglobin (Hb) or globins. Digestion of host Hb is an essential step which provides the parasite with amino acids for protein synthesis, and regulates osmolarity. In Plasmodium falciparum (isolate 3D7), this protein is Plasmepsin III.